Consider the following 271-residue polypeptide: Proteasome inhibitor PI31 subunit (271 aa).

A2 is subject to N-acetylalanine. The tract at residues 2–150 is important for homodimerization and interaction with FBXO7; it reads AGLEVLFASA…PIHEQWEKAN (149 aa). S153 bears the Phosphoserine mark. R205 carries the post-translational modification Omega-N-methylarginine. Asymmetric dimethylarginine is present on R219. Residues 222 to 271 form a disordered region; that stretch reads IDPSSGLPNRLPPGAVPPGARFDPFGPIGTSPPGPNPDHLPPPGYDDMYL. An Omega-N-methylarginine modification is found at R231. The span at 251 to 265 shows a compositional bias: pro residues; sequence TSPPGPNPDHLPPPG. S252 is modified (phosphoserine).

It belongs to the proteasome inhibitor PI31 family. Monomer and homodimer. Interacts with FBXO7.

It localises to the cytoplasm. It is found in the endoplasmic reticulum. Its function is as follows. Plays an important role in control of proteasome function. Inhibits the hydrolysis of protein and peptide substrates by the 20S proteasome. Also inhibits the activation of the proteasome by the proteasome regulatory proteins PA700 and PA28. In Pongo abelii (Sumatran orangutan), this protein is Proteasome inhibitor PI31 subunit (PSMF1).